The primary structure comprises 328 residues: Dolichyl-diphosphooligosaccharide--protein glycosyltransferase subunit MAGT1 (328 aa).

An N-terminal signal peptide occupies residues 1–22 (MLHKLLIVVFLVVCLHDMRLNG). The Extracellular segment spans residues 23–177 (QKKKETLLSE…DVHIRVIRPP (155 aa)). Residues 40–168 (WVSKRAVVRL…LARWVADRTD (129 aa)) form the Thioredoxin domain. Asn-64 carries an N-linked (GlcNAc...) asparagine glycan. Residues Cys-80 and Cys-83 are joined by a disulfide bond. A helical membrane pass occupies residues 178 to 198 (NYAGPLMLGLLLAFIGSLAYL). The Cytoplasmic portion of the chain corresponds to 199-202 (RRNN). The helical transmembrane segment at 203 to 223 (LEFLFNKNVWAFSALCFVLIM) threads the bilayer. Residues 224–257 (TSGQMWNHIRGPPYAHKNPNTGQVSYIHGSSQAQ) are Extracellular-facing. Residues 258–278 (FVAETHIVLLFNAAVTIGMVL) traverse the membrane as a helical segment. Topologically, residues 279–293 (LHEAATSGLDIVKRK) are cytoplasmic. A helical transmembrane segment spans residues 294-314 (IMCVAGIGLVVLFFSWLLSVF). Residues 315–328 (RAKYHGYPYSFLFG) lie on the Extracellular side of the membrane.

This sequence belongs to the OST3/OST6 family. Accessory component of the STT3B-containing form of the oligosaccharyltransferase (OST) complex.

Its subcellular location is the cell membrane. The protein resides in the endoplasmic reticulum. It localises to the endoplasmic reticulum membrane. It participates in protein modification; protein glycosylation. Its function is as follows. Accessory component of the STT3B-containing form of the N-oligosaccharyl transferase (OST) complex which catalyzes the transfer of a high mannose oligosaccharide from a lipid-linked oligosaccharide donor to an asparagine residue within an Asn-X-Ser/Thr consensus motif in nascent polypeptide chains. Involved in N-glycosylation of STT3B-dependent substrates. Specifically required for the glycosylation of a subset of acceptor sites that are near cysteine residues; in this function seems to act redundantly with TUSC3. In its oxidized form proposed to form transient mixed disulfides with a glycoprotein substrate to facilitate access of STT3B to the unmodified acceptor site. Also has oxidoreductase-independent functions in the STT3B-containing OST complex possibly involving substrate recognition. Could indirectly play a role in Mg(2+) transport. This Danio rerio (Zebrafish) protein is Dolichyl-diphosphooligosaccharide--protein glycosyltransferase subunit MAGT1.